The following is a 407-amino-acid chain: tRNA (guanine(26)-N(2))-dimethyltransferase (407 aa).

Positions 10-400 (AVTHEGRSII…APWGEVLEAV (391 aa)) constitute a Trm1 methyltransferase domain. 4 residues coordinate S-adenosyl-L-methionine: arginine 50, arginine 82, aspartate 99, and glutamate 128.

This sequence belongs to the class I-like SAM-binding methyltransferase superfamily. Trm1 family.

It carries out the reaction guanosine(26) in tRNA + 2 S-adenosyl-L-methionine = N(2)-dimethylguanosine(26) in tRNA + 2 S-adenosyl-L-homocysteine + 2 H(+). Dimethylates a single guanine residue at position 26 of a number of tRNAs using S-adenosyl-L-methionine as donor of the methyl groups. In Aeropyrum pernix (strain ATCC 700893 / DSM 11879 / JCM 9820 / NBRC 100138 / K1), this protein is tRNA (guanine(26)-N(2))-dimethyltransferase.